Here is a 91-residue protein sequence, read N- to C-terminus: uncharacterized protein (91 aa).

The tract at residues 71–91 (EANDRPSKKCGSGNLRVEKLV) is disordered.

This is an uncharacterized protein from Archaeoglobus fulgidus (strain ATCC 49558 / DSM 4304 / JCM 9628 / NBRC 100126 / VC-16).